The chain runs to 51 residues: Light-harvesting protein B-800/850 beta chain (51 aa).

At 2–23 (ADDANKVWPSGLTTAEAEELQK) the chain is on the cytoplasmic side. The chain crosses the membrane as a helical span at residues 24–46 (GLVDGTRVFGVIAVLAHILAYAY). H40 serves as a coordination point for a bacteriochlorophyll. At 47–51 (TPWLH) the chain is on the periplasmic side.

The protein belongs to the antenna complex beta subunit family. As to quaternary structure, an alpha/beta heterodimer conjugated to 3 bacteriochlorophyll molecules. The core complex is formed by different alpha and beta chains, binding bacteriochlorophyll molecules, and arranged most probably in tetrameric structures disposed around the reaction center. The non-pigmented gamma chains may constitute additional components.

It is found in the cell inner membrane. In terms of biological role, antenna complexes are light-harvesting systems, which transfer the excitation energy to the reaction centers. This chain is Light-harvesting protein B-800/850 beta chain (pucB), found in Rubrivivax gelatinosus (Rhodocyclus gelatinosus).